A 296-amino-acid chain; its full sequence is Thymidylate synthase (296 aa).

Residues arginine 24 and 151-152 each bind dUMP; that span reads RR. Cysteine 171 (nucleophile) is an active-site residue. DUMP-binding positions include 197-200, asparagine 208, and 238-240; these read RSAD and HVY. Aspartate 200 is a (6R)-5,10-methylene-5,6,7,8-tetrahydrofolate binding site.

Belongs to the thymidylate synthase family. In terms of assembly, homodimer.

It carries out the reaction dUMP + (6R)-5,10-methylene-5,6,7,8-tetrahydrofolate = 7,8-dihydrofolate + dTMP. Its pathway is pyrimidine metabolism; dTTP biosynthesis. The sequence is that of Thymidylate synthase (tms1) from Agaricus bisporus (White button mushroom).